We begin with the raw amino-acid sequence, 558 residues long: Polysialic acid transport protein KpsD (558 aa).

The signal sequence occupies residues 1–20; sequence MKLFKSILLIAACHAAQASA.

To E.coli K1 KpsD.

Its subcellular location is the periplasm. Its function is as follows. Involved in the translocation of the polysialic acid capsule across the outer membrane to the cell surface. May function as the periplasmic binding element of the PSA transport system, in which it transiently interacts with the membrane component of the transporter, binds polysaccharide and transports the polymer to a component in the outer membrane. This Escherichia coli protein is Polysialic acid transport protein KpsD (kpsD).